A 285-amino-acid polypeptide reads, in one-letter code: tRNA pseudouridine synthase B (285 aa).

The active-site Nucleophile is the Asp40.

Belongs to the pseudouridine synthase TruB family. Type 1 subfamily.

The enzyme catalyses uridine(55) in tRNA = pseudouridine(55) in tRNA. In terms of biological role, responsible for synthesis of pseudouridine from uracil-55 in the psi GC loop of transfer RNAs. This chain is tRNA pseudouridine synthase B, found in Caldanaerobacter subterraneus subsp. tengcongensis (strain DSM 15242 / JCM 11007 / NBRC 100824 / MB4) (Thermoanaerobacter tengcongensis).